The primary structure comprises 445 residues: MELFGTDGVRGKAGKLLSAQLSMRLAMAAGIYFRKNSRTNKIVVGKDTRRSGYMIENALVSGLTAVGYNVIQVGPMPTPAIAFLTEDLRCDAGIMISASHNPYYDNGIKFFNHQGDKLQPEDEKAIEAIFFDEQTIEENQKTDQDIGSSKRIDDVIGRYIVHLKNSFPKDLTLNGLRVVIDTANGAAYKVAPTVFSELGAEVFVINDEPNGFNINEKCGAMYPGELAKKVREYRADIGFALDGDADRLVVVDEKGKIVPGDLVIGALATYLKQEGMLQADAIVATVMSNKALEDYLATLGIELVRSNVGDKYVLDEMKKRGINFGGESSGHIIFGDYSKTGDGIVTALQITAYMLRSQKGASEILYPFSLYPSKMENVTVKEKKPLETIEEFPELQKRIEKSGIRSLIRYSGTENKLRILLEGKDQKKLEKLMEELIQFFKERLS.

Ser99 serves as the catalytic Phosphoserine intermediate. Positions 99, 242, 244, and 246 each coordinate Mg(2+). Ser99 carries the post-translational modification Phosphoserine.

The protein belongs to the phosphohexose mutase family. It depends on Mg(2+) as a cofactor. Post-translationally, activated by phosphorylation.

It carries out the reaction alpha-D-glucosamine 1-phosphate = D-glucosamine 6-phosphate. In terms of biological role, catalyzes the conversion of glucosamine-6-phosphate to glucosamine-1-phosphate. The sequence is that of Phosphoglucosamine mutase from Nitratiruptor sp. (strain SB155-2).